Here is a 329-residue protein sequence, read N- to C-terminus: Glycerol-3-phosphate dehydrogenase [NAD(P)+] (329 aa).

The NADPH site is built by Trp-11 and Lys-101. Sn-glycerol 3-phosphate is bound by residues Lys-101, Gly-132, and Ser-134. Position 136 (Ala-136) interacts with NADPH. Lys-188, Asp-241, Ser-251, Arg-252, and Asn-253 together coordinate sn-glycerol 3-phosphate. The active-site Proton acceptor is Lys-188. Arg-252 is an NADPH binding site. Val-276 and Glu-278 together coordinate NADPH.

This sequence belongs to the NAD-dependent glycerol-3-phosphate dehydrogenase family.

It localises to the cytoplasm. The enzyme catalyses sn-glycerol 3-phosphate + NAD(+) = dihydroxyacetone phosphate + NADH + H(+). It carries out the reaction sn-glycerol 3-phosphate + NADP(+) = dihydroxyacetone phosphate + NADPH + H(+). It functions in the pathway membrane lipid metabolism; glycerophospholipid metabolism. Catalyzes the reduction of the glycolytic intermediate dihydroxyacetone phosphate (DHAP) to sn-glycerol 3-phosphate (G3P), the key precursor for phospholipid synthesis. The sequence is that of Glycerol-3-phosphate dehydrogenase [NAD(P)+] from Phytoplasma australiense.